The chain runs to 283 residues: Ribose-phosphate pyrophosphokinase (283 aa).

Residues D34–E36 and R89–Q90 contribute to the ATP site. Mg(2+)-binding residues include H120 and D159. Residue K182 is part of the active site. Positions 184 and 208 each coordinate D-ribose 5-phosphate.

It belongs to the ribose-phosphate pyrophosphokinase family. Class III (archaeal) subfamily. It depends on Mg(2+) as a cofactor.

It localises to the cytoplasm. It catalyses the reaction D-ribose 5-phosphate + ATP = 5-phospho-alpha-D-ribose 1-diphosphate + AMP + H(+). It functions in the pathway metabolic intermediate biosynthesis; 5-phospho-alpha-D-ribose 1-diphosphate biosynthesis; 5-phospho-alpha-D-ribose 1-diphosphate from D-ribose 5-phosphate (route I): step 1/1. In terms of biological role, involved in the biosynthesis of the central metabolite phospho-alpha-D-ribosyl-1-pyrophosphate (PRPP) via the transfer of pyrophosphoryl group from ATP to 1-hydroxyl of ribose-5-phosphate (Rib-5-P). In Methanosarcina acetivorans (strain ATCC 35395 / DSM 2834 / JCM 12185 / C2A), this protein is Ribose-phosphate pyrophosphokinase.